Here is a 472-residue protein sequence, read N- to C-terminus: 3-isopropylmalate dehydratase large subunit (472 aa).

Residues Cys-347, Cys-409, and Cys-412 each contribute to the [4Fe-4S] cluster site.

It belongs to the aconitase/IPM isomerase family. LeuC type 1 subfamily. As to quaternary structure, heterodimer of LeuC and LeuD. It depends on [4Fe-4S] cluster as a cofactor.

It catalyses the reaction (2R,3S)-3-isopropylmalate = (2S)-2-isopropylmalate. The protein operates within amino-acid biosynthesis; L-leucine biosynthesis; L-leucine from 3-methyl-2-oxobutanoate: step 2/4. Catalyzes the isomerization between 2-isopropylmalate and 3-isopropylmalate, via the formation of 2-isopropylmaleate. This chain is 3-isopropylmalate dehydratase large subunit, found in Salinibacter ruber (strain DSM 13855 / M31).